We begin with the raw amino-acid sequence, 161 residues long: Probable endopeptidase HI_1314 (161 aa).

A signal peptide spans 1 to 18 (MKVYKSFLIATASLFLFA). Cys19 carries N-palmitoyl cysteine lipidation. Cys19 carries the S-diacylglycerol cysteine lipid modification. Residues 39–161 (IMAIAMLSEQ…SKAFWQVRRI (123 aa)) form the NlpC/P60 domain. Cys69 serves as the catalytic Nucleophile. Catalysis depends on His122, which acts as the Proton acceptor. His134 is a catalytic residue.

The protein belongs to the peptidase C40 family.

The protein localises to the cell membrane. This is Probable endopeptidase HI_1314 from Haemophilus influenzae (strain ATCC 51907 / DSM 11121 / KW20 / Rd).